Consider the following 256-residue polypeptide: Thiazole synthase (256 aa).

Catalysis depends on Lys-95, which acts as the Schiff-base intermediate with DXP. 1-deoxy-D-xylulose 5-phosphate contacts are provided by residues Gly-156, 182–183 (AG), and 204–205 (NT).

Belongs to the ThiG family. Homotetramer. Forms heterodimers with either ThiH or ThiS.

It localises to the cytoplasm. It catalyses the reaction [ThiS sulfur-carrier protein]-C-terminal-Gly-aminoethanethioate + 2-iminoacetate + 1-deoxy-D-xylulose 5-phosphate = [ThiS sulfur-carrier protein]-C-terminal Gly-Gly + 2-[(2R,5Z)-2-carboxy-4-methylthiazol-5(2H)-ylidene]ethyl phosphate + 2 H2O + H(+). It functions in the pathway cofactor biosynthesis; thiamine diphosphate biosynthesis. Catalyzes the rearrangement of 1-deoxy-D-xylulose 5-phosphate (DXP) to produce the thiazole phosphate moiety of thiamine. Sulfur is provided by the thiocarboxylate moiety of the carrier protein ThiS. In vitro, sulfur can be provided by H(2)S. The chain is Thiazole synthase from Escherichia coli O6:H1 (strain CFT073 / ATCC 700928 / UPEC).